The chain runs to 68 residues: uncharacterized protein (68 aa).

This is an uncharacterized protein from Archaeoglobus fulgidus (strain ATCC 49558 / DSM 4304 / JCM 9628 / NBRC 100126 / VC-16).